A 451-amino-acid chain; its full sequence is Tubulin beta-4 chain (451 aa).

GTP is bound by residues Q11, E69, S138, G142, T143, G144, N204, and N226. E69 contributes to the Mg(2+) binding site. Over residues 417–427 (DLVSEYQQYQD) the composition is skewed to polar residues. Residues 417 to 451 (DLVSEYQQYQDATAEEEGEYDEDDGGYGDEDDGMM) form a disordered region. Over residues 429 to 451 (TAEEEGEYDEDDGGYGDEDDGMM) the composition is skewed to acidic residues.

It belongs to the tubulin family. In terms of assembly, dimer of alpha and beta chains. A typical microtubule is a hollow water-filled tube with an outer diameter of 25 nm and an inner diameter of 15 nM. Alpha-beta heterodimers associate head-to-tail to form protofilaments running lengthwise along the microtubule wall with the beta-tubulin subunit facing the microtubule plus end conferring a structural polarity. Microtubules usually have 13 protofilaments but different protofilament numbers can be found in some organisms and specialized cells. Requires Mg(2+) as cofactor.

It localises to the cytoplasm. The protein resides in the cytoskeleton. In terms of biological role, tubulin is the major constituent of microtubules, a cylinder consisting of laterally associated linear protofilaments composed of alpha- and beta-tubulin heterodimers. Microtubules grow by the addition of GTP-tubulin dimers to the microtubule end, where a stabilizing cap forms. Below the cap, tubulin dimers are in GDP-bound state, owing to GTPase activity of alpha-tubulin. This chain is Tubulin beta-4 chain (TUBB4), found in Oomycete-like sp. (strain MacKay2000).